We begin with the raw amino-acid sequence, 262 residues long: Small ribosomal subunit protein eS1 (262 aa).

This sequence belongs to the eukaryotic ribosomal protein eS1 family. Component of the small ribosomal subunit. Mature ribosomes consist of a small (40S) and a large (60S) subunit. The 40S subunit contains about 33 different proteins and 1 molecule of RNA (18S). The 60S subunit contains about 49 different proteins and 3 molecules of RNA (25S, 5.8S and 5S).

Its subcellular location is the cytoplasm. The chain is Small ribosomal subunit protein eS1 from Brassica campestris (Field mustard).